The following is a 695-amino-acid chain: Phosphate acetyltransferase (695 aa).

The interval Phe374–Arg695 is phosphate acetyltransferase.

This sequence in the N-terminal section; belongs to the CobB/CobQ family. It in the C-terminal section; belongs to the phosphate acetyltransferase and butyryltransferase family. In terms of assembly, homohexamer.

It localises to the cytoplasm. It carries out the reaction acetyl-CoA + phosphate = acetyl phosphate + CoA. The protein operates within metabolic intermediate biosynthesis; acetyl-CoA biosynthesis; acetyl-CoA from acetate: step 2/2. Its function is as follows. Involved in acetate metabolism. This chain is Phosphate acetyltransferase (pta), found in Pseudomonas putida (strain ATCC 47054 / DSM 6125 / CFBP 8728 / NCIMB 11950 / KT2440).